Here is a 93-residue protein sequence, read N- to C-terminus: Exodeoxyribonuclease 7 small subunit (93 aa).

Residues 1 to 17 (MAKSSASSLSSAKPVAA) show a composition bias toward low complexity. Residues 1-22 (MAKSSASSLSSAKPVAAGPDAS) are disordered.

This sequence belongs to the XseB family. As to quaternary structure, heterooligomer composed of large and small subunits.

Its subcellular location is the cytoplasm. The catalysed reaction is Exonucleolytic cleavage in either 5'- to 3'- or 3'- to 5'-direction to yield nucleoside 5'-phosphates.. Functionally, bidirectionally degrades single-stranded DNA into large acid-insoluble oligonucleotides, which are then degraded further into small acid-soluble oligonucleotides. This chain is Exodeoxyribonuclease 7 small subunit, found in Polaromonas naphthalenivorans (strain CJ2).